The sequence spans 393 residues: MGKSDFLTPKAIANRIKSKGLQKLRWYCQMCQKQCRDENGFKCHCMSESHQRQLLLASENPQQFMDYFSEEFRNDFLELLRRRFGTKRVHNNIVYNEYISHREHIHMNATQWETLTDFTKWLGREGLCKVDETPKGWYIQYIDRDPETIRRQLELEKKKKQDLDDEEKTAKFIEEQVRRGLEGKEQEVPTFTELSRENDEEKVTFNLSKGACSSSGATSSKSSTLGPSALKTIGSSASVKRKESSQSSTQSKEKKKKKSALDEIMEIEEEKKRTARTDYWLQPEIIVKIITKKLGEKYHKKKAIVKEVIDKYTAVVKMIDSGDKLKLDQTHLETVIPAPGKRILVLNGGYRGNEGTLESINEKTFSATIVIETGPLKGRRVEGIQYEDISKLA.

The C2H2-type zinc finger occupies 28 to 50 (CQMCQKQCRDENGFKCHCMSESH). Residues 51 to 160 (QRQLLLASEN…RQLELEKKKK (110 aa)) are winged helix-turn-helix (wHTH). N6,N6,N6-trimethyllysine; by METTL22; in vitro is present on lysine 135. Lysine 135 carries the post-translational modification N6-methyllysine. Positions 147-180 (ETIRRQLELEKKKKQDLDDEEKTAKFIEEQVRRG) form a coiled coil. The span at 209–224 (KGACSSSGATSSKSST) shows a compositional bias: low complexity. Positions 209–260 (KGACSSSGATSSKSSTLGPSALKTIGSSASVKRKESSQSSTQSKEKKKKKSA) are disordered. The stretch at 250–277 (QSKEKKKKKSALDEIMEIEEEKKRTART) forms a coiled coil. A C-terminal subdomain A region spans residues 284 to 334 (EIIVKIITKKLGEKYHKKKAIVKEVIDKYTAVVKMIDSGDKLKLDQTHLET). The tract at residues 340 to 391 (GKRILVLNGGYRGNEGTLESINEKTFSATIVIETGPLKGRRVEGIQYEDISK) is C-terminal subdomain B.

It belongs to the KIN17 family. Associated with DNA polymerase alpha, RFC1 and cyclin A, in multiprotein DNA replication complexes. Also associates with replication origins at the G1/S phase boundary and throughout the S phase in vivo. As to quaternary structure, (Microbial infection) Interacts with SV40 large T antigen. As to expression, ubiquitously expressed in all tissues examined, with highest levels in skeletal muscle, heart and testis. Differentially expressed in non-tumorigenic and tumorigenic cell lines. Highly expressed in proliferating epithelial keratinocyte cells in vitro (at protein level).

The protein localises to the nucleus. The protein resides in the cytoplasm. Involved in DNA replication and the cellular response to DNA damage. May participate in DNA replication factories and create a bridge between DNA replication and repair mediated by high molecular weight complexes. May play a role in illegitimate recombination and regulation of gene expression. May participate in mRNA processing. Binds, in vitro, to double-stranded DNA. Also shown to bind preferentially to curved DNA in vitro and in vivo. Binds via its C-terminal domain to RNA in vitro. The polypeptide is DNA/RNA-binding protein KIN17 (Homo sapiens (Human)).